The chain runs to 281 residues: Kinetochore-associated protein NSL1 homolog (281 aa).

A Phosphoserine modification is found at serine 4. At threonine 244 the chain carries Phosphothreonine.

Component of the MIS12 complex composed of MIS12, DSN1, NSL1/DC8 and PMF1. Interacts with KNL1.

The protein localises to the nucleus. It localises to the chromosome. It is found in the centromere. The protein resides in the kinetochore. Functionally, part of the MIS12 complex which is required for normal chromosome alignment and segregation and kinetochore formation during mitosis. This is Kinetochore-associated protein NSL1 homolog (NSL1) from Homo sapiens (Human).